The sequence spans 239 residues: Fatty acid metabolism regulator protein (239 aa).

The HTH gntR-type domain maps to 6–74 (QSPAGFAEEY…HGKPTKVNNF (69 aa)). Residues 34 to 53 (ERELSELIGVTRTTLREVLQ) constitute a DNA-binding region (H-T-H motif).

As to quaternary structure, homodimer.

The protein localises to the cytoplasm. Functionally, multifunctional regulator of fatty acid metabolism. Represses transcription of at least eight genes required for fatty acid transport and beta-oxidation including fadA, fadB, fadD, fadL and fadE. Activates transcription of at least three genes required for unsaturated fatty acid biosynthesis: fabA, fabB and iclR, the gene encoding the transcriptional regulator of the aceBAK operon encoding the glyoxylate shunt enzymes. Binding of FadR is specifically inhibited by long chain fatty acyl-CoA compounds. This chain is Fatty acid metabolism regulator protein, found in Salmonella typhimurium (strain LT2 / SGSC1412 / ATCC 700720).